Consider the following 212-residue polypeptide: MQILLAALVAYLIGSVSFAVIVSAAMGLADPRSYGSKNPGATNVLRSGNKKAAILTLVGDAFKGWLAVWLARHFGMPDVAVAWVAIAVFVGHLYPVFFRFQGGKGVATAAGVLLAVHPVLGLATALTWLIVAFFFRYSSLAALVAAVFAPVFDVFLFGTRNNPIAWAVLAMSVLLVWRHRGNIAKLLAGQESRIGDKKKAAADGGAQGGGKV.

Helical transmembrane passes span isoleucine 3–serine 23, lysine 51–alanine 71, aspartate 78–phenylalanine 98, alanine 115–phenylalanine 135, and serine 139–threonine 159.

Belongs to the PlsY family. Probably interacts with PlsX.

Its subcellular location is the cell inner membrane. It carries out the reaction an acyl phosphate + sn-glycerol 3-phosphate = a 1-acyl-sn-glycero-3-phosphate + phosphate. It functions in the pathway lipid metabolism; phospholipid metabolism. Catalyzes the transfer of an acyl group from acyl-phosphate (acyl-PO(4)) to glycerol-3-phosphate (G3P) to form lysophosphatidic acid (LPA). This enzyme utilizes acyl-phosphate as fatty acyl donor, but not acyl-CoA or acyl-ACP. The sequence is that of Glycerol-3-phosphate acyltransferase from Burkholderia vietnamiensis (strain G4 / LMG 22486) (Burkholderia cepacia (strain R1808)).